The chain runs to 376 residues: Putative glutamate--cysteine ligase 2 (376 aa).

This sequence belongs to the glutamate--cysteine ligase type 2 family. YbdK subfamily.

The catalysed reaction is L-cysteine + L-glutamate + ATP = gamma-L-glutamyl-L-cysteine + ADP + phosphate + H(+). In terms of biological role, ATP-dependent carboxylate-amine ligase which exhibits weak glutamate--cysteine ligase activity. The sequence is that of Putative glutamate--cysteine ligase 2 from Paracoccus denitrificans (strain Pd 1222).